A 124-amino-acid polypeptide reads, in one-letter code: Small ribosomal subunit protein uS12 (124 aa).

Aspartate 89 carries the post-translational modification 3-methylthioaspartic acid.

It belongs to the universal ribosomal protein uS12 family. As to quaternary structure, part of the 30S ribosomal subunit. Contacts proteins S8 and S17. May interact with IF1 in the 30S initiation complex.

In terms of biological role, with S4 and S5 plays an important role in translational accuracy. Functionally, interacts with and stabilizes bases of the 16S rRNA that are involved in tRNA selection in the A site and with the mRNA backbone. Located at the interface of the 30S and 50S subunits, it traverses the body of the 30S subunit contacting proteins on the other side and probably holding the rRNA structure together. The combined cluster of proteins S8, S12 and S17 appears to hold together the shoulder and platform of the 30S subunit. The polypeptide is Small ribosomal subunit protein uS12 (Shewanella baltica (strain OS223)).